Consider the following 141-residue polypeptide: Hemoglobin subunit alpha (141 aa).

The Globin domain occupies 1 to 141 (VLSPADKTNI…VSTVLTSKYR (141 aa)). Residue Ser-3 is modified to Phosphoserine. An N6-succinyllysine modification is found at Lys-7. At Thr-8 the chain carries Phosphothreonine. Lys-11 is subject to N6-succinyllysine. An N6-acetyllysine; alternate modification is found at Lys-16. Position 16 is an N6-succinyllysine; alternate (Lys-16). A Phosphotyrosine modification is found at Tyr-24. A Phosphoserine modification is found at Ser-35. At Lys-40 the chain carries N6-succinyllysine. The residue at position 49 (Ser-49) is a Phosphoserine. His-58 is an O2 binding site. Heme b is bound at residue His-87. Ser-102 carries the post-translational modification Phosphoserine. A Phosphothreonine modification is found at Thr-108. The residue at position 124 (Ser-124) is a Phosphoserine. Thr-134 and Thr-137 each carry phosphothreonine. Ser-138 is modified (phosphoserine).

It belongs to the globin family. Heterotetramer of two alpha chains and two beta chains. In terms of tissue distribution, red blood cells.

In terms of biological role, involved in oxygen transport from the lung to the various peripheral tissues. Hemopressin acts as an antagonist peptide of the cannabinoid receptor CNR1. Hemopressin-binding efficiently blocks cannabinoid receptor CNR1 and subsequent signaling. The protein is Hemoglobin subunit alpha (HBA) of Canis lupus familiaris (Dog).